Reading from the N-terminus, the 454-residue chain is Phosphoglucosamine mutase (454 aa).

Residue S101 is the Phosphoserine intermediate of the active site. Mg(2+)-binding residues include S101, D243, D245, and D247. S101 is subject to Phosphoserine.

Belongs to the phosphohexose mutase family. Requires Mg(2+) as cofactor. In terms of processing, activated by phosphorylation.

The enzyme catalyses alpha-D-glucosamine 1-phosphate = D-glucosamine 6-phosphate. In terms of biological role, catalyzes the conversion of glucosamine-6-phosphate to glucosamine-1-phosphate. This Geotalea uraniireducens (strain Rf4) (Geobacter uraniireducens) protein is Phosphoglucosamine mutase.